A 72-amino-acid chain; its full sequence is DNA-directed RNA polymerase subunit omega (72 aa).

The protein belongs to the RNA polymerase subunit omega family. The RNAP catalytic core consists of 2 alpha, 1 beta, 1 beta' and 1 omega subunit. When a sigma factor is associated with the core the holoenzyme is formed, which can initiate transcription.

The catalysed reaction is RNA(n) + a ribonucleoside 5'-triphosphate = RNA(n+1) + diphosphate. In terms of biological role, promotes RNA polymerase assembly. Latches the N- and C-terminal regions of the beta' subunit thereby facilitating its interaction with the beta and alpha subunits. The polypeptide is DNA-directed RNA polymerase subunit omega (Francisella tularensis subsp. holarctica (strain LVS)).